Reading from the N-terminus, the 205-residue chain is Probable 3'-5' exonuclease KapD (205 aa).

Residues 6-173 form the Exonuclease domain; it reads LLIIDFEFTM…DDALTAYKLF (168 aa). D10, E12, and D104 together coordinate Mg(2+). The Proton acceptor role is filled by E12. Residue E12 participates in AMP binding. H160 serves as the catalytic Proton acceptor. H160 is an AMP binding site. Residue D165 coordinates Mg(2+).

Requires Mg(2+) as cofactor.

In terms of biological role, specifically inhibits the KinA pathway to sporulation. The polypeptide is Probable 3'-5' exonuclease KapD (kapD) (Bacillus subtilis (strain 168)).